Here is a 123-residue protein sequence, read N- to C-terminus: MIQPQTLLNVADNSGARKLMCIRVIGAAGNQRYARIGDVIVAVIKDALPQMPLERSEVIRAVIVRTCKEFKCEDGIIIRYDDNAAVIIDQKGNPKGTRVFGAIAEELRELNFTKIVSLAPEVL.

It belongs to the universal ribosomal protein uL14 family. In terms of assembly, part of the 50S ribosomal subunit.

The protein localises to the plastid. The protein resides in the chloroplast. In terms of biological role, binds to 23S rRNA. The protein is Large ribosomal subunit protein uL14c of Lolium perenne (Perennial ryegrass).